Reading from the N-terminus, the 410-residue chain is Subtilisin-like protease CPC735_003880 (410 aa).

The first 17 residues, Met-1–Ala-17, serve as a signal peptide directing secretion. The propeptide occupies Asn-18–Ala-118. An Inhibitor I9 domain is found at Arg-31 to Ala-118. The Peptidase S8 domain maps to Gly-127–Ala-410. Asp-159 acts as the Charge relay system in catalysis. N-linked (GlcNAc...) asparagine glycosylation occurs at Asn-182. The active-site Charge relay system is His-191. 3 N-linked (GlcNAc...) asparagine glycosylation sites follow: Asn-238, Asn-251, and Asn-338. Ser-347 serves as the catalytic Charge relay system. N-linked (GlcNAc...) asparagine glycosylation occurs at Asn-405.

Belongs to the peptidase S8 family.

The protein resides in the secreted. Functionally, secreted subtilisin-like serine protease with keratinolytic activity that contributes to pathogenicity. The sequence is that of Subtilisin-like protease CPC735_003880 from Coccidioides posadasii (strain C735) (Valley fever fungus).